The following is a 109-amino-acid chain: Nucleoid-associated protein ECA1177 (109 aa).

This sequence belongs to the YbaB/EbfC family. As to quaternary structure, homodimer.

It localises to the cytoplasm. It is found in the nucleoid. In terms of biological role, binds to DNA and alters its conformation. May be involved in regulation of gene expression, nucleoid organization and DNA protection. This Pectobacterium atrosepticum (strain SCRI 1043 / ATCC BAA-672) (Erwinia carotovora subsp. atroseptica) protein is Nucleoid-associated protein ECA1177.